A 350-amino-acid polypeptide reads, in one-letter code: Cephaeline 6'-O-methyltransferase IpeOMT1 (350 aa).

S-adenosyl-L-methionine-binding residues include Gly-193, Asp-216, Asp-236, Met-237, and Lys-250. His-254 functions as the Proton acceptor in the catalytic mechanism.

Belongs to the class I-like SAM-binding methyltransferase superfamily. Cation-independent O-methyltransferase family. In terms of tissue distribution, expressed in roots.

It localises to the cytoplasm. It is found in the cytosol. The catalysed reaction is cephaeline + S-adenosyl-L-methionine = emetine + S-adenosyl-L-homocysteine + H(+). It carries out the reaction deacetylisoipecoside + S-adenosyl-L-methionine = 6-O-methyldeacetylisoipecoside + S-adenosyl-L-homocysteine + H(+). It catalyses the reaction 7-O-methyldeacetylisoipecoside + S-adenosyl-L-methionine = 6,7-O,O-dimethyldeacetylisoipecoside + S-adenosyl-L-homocysteine + H(+). The enzyme catalyses norcoclaurine + S-adenosyl-L-methionine = coclaurine + S-adenosyl-L-homocysteine + H(+). The catalysed reaction is (S)-norprotosinomenine + S-adenosyl-L-methionine = (S)-6-O-methylnorprotosinomenine + S-adenosyl-L-homocysteine + H(+). It carries out the reaction (R)-norprotosinomenine + S-adenosyl-L-methionine = (R)-6-O-methylnorprotosinomenine + S-adenosyl-L-homocysteine + H(+). It participates in alkaloid biosynthesis. In terms of biological role, O-methyltransferase involved in the biosynthesis of ipecac and benzylisoquinoline monoterpenoid-isoquinoline alkaloids natural products, starting by the condensation of dopamine and secologanin, and including emetine and cephaeline, drugs used both as anti-protozoal (e.g. treatment of ameobiasis) and as emetic agents. Mediates cephaeline 6'-O-methylation to produce emetine. Catalyzes the 6-O-methylation of N-deacetylisoipecoside, 7-O-methyl-N-deacetylisoipecoside, isococlaurine, norcoclaurine, (S)-norprotosinomenine and (R)-norprotosinomenine, and, with a lower efficiency, of 4'-O-methyllaudanosoline, isoorientaline and protosinomenine. Supports also the 4'-O-methylation of nororientaline. In Carapichea ipecacuanha (Ipecac), this protein is Cephaeline 6'-O-methyltransferase IpeOMT1.